The chain runs to 590 residues: DNA primase (590 aa).

A CHC2-type zinc finger spans residues 37-61; the sequence is CPFHTEKTPSFIVNPAGAHYHCFGC. Positions 253 to 333 constitute a Toprim domain; that stretch reads KKVILVEGQA…QMSVFVCKLP (81 aa). Positions 259, 304, and 306 each coordinate Mg(2+).

The protein belongs to the DnaG primase family. As to quaternary structure, monomer. Interacts with DnaB. It depends on Zn(2+) as a cofactor. Requires Mg(2+) as cofactor.

It carries out the reaction ssDNA + n NTP = ssDNA/pppN(pN)n-1 hybrid + (n-1) diphosphate.. In terms of biological role, RNA polymerase that catalyzes the synthesis of short RNA molecules used as primers for DNA polymerase during DNA replication. In Chlamydia pneumoniae (Chlamydophila pneumoniae), this protein is DNA primase.